A 557-amino-acid polypeptide reads, in one-letter code: Urocanate hydratase (557 aa).

The disordered stretch occupies residues 1–20 (MSNPRHNEREVRSPRGDELN). Residues 52–53 (GG), Gln-130, 176–178 (GMG), Glu-196, Arg-201, 242–243 (NA), 263–267 (QTSAH), 273–274 (YL), and Tyr-322 each bind NAD(+). The active site involves Cys-410. Gly-492 serves as a coordination point for NAD(+).

The protein belongs to the urocanase family. NAD(+) serves as cofactor.

It is found in the cytoplasm. It carries out the reaction 4-imidazolone-5-propanoate = trans-urocanate + H2O. Its pathway is amino-acid degradation; L-histidine degradation into L-glutamate; N-formimidoyl-L-glutamate from L-histidine: step 2/3. In terms of biological role, catalyzes the conversion of urocanate to 4-imidazolone-5-propionate. The chain is Urocanate hydratase from Brucella canis (strain ATCC 23365 / NCTC 10854 / RM-666).